A 411-amino-acid chain; its full sequence is MLIRKWKAGLLAGLSILALASSADAGEVRMTVAEYSAKTGPYFEEVKKAFEAENPGITLNFEVVPWDVLLQKLTTDISAGTNADLSIIGTRWLIDFVQQGIAEPLDGYMNDEFKGRFIETFLSPSVLDGKTYGLPIAASARAMYYNKDLFEKAGIKNPPANWDELKADAAKIKALGGENYGFGLQGKEIETDVYYYYAMWSYGTEILNKDGTSGLSTPGALEAAKLYKSMIDDGLTQPGVTSYAREDVQNLFKQGKVGMMITAPFLSNQIKEEAPNLKYGVAAIPAGPTGARGTYGVTDSVIMFQNSKNKEEAWKVLDFLFQKDWRAKFTQNEGFLPVNKEEAKMDYYVNNADLAAFTALLPDARFAPVIPGWEEIADITSNAMQSIYLGKGEPDAVLKDAAAKADAILKK.

A signal peptide spans Met1–Ala25.

Belongs to the bacterial solute-binding protein 1 family. The complex is composed of two ATP-binding proteins (BRA0745), two transmembrane proteins (BRA0749) and a solute-binding protein (BRA0748).

The protein localises to the periplasm. In terms of biological role, probably part of an ABC transporter complex. The polypeptide is Putative binding protein BRA0748/BS1330_II0741 (Brucella suis biovar 1 (strain 1330)).